Reading from the N-terminus, the 515-residue chain is Microtubule-associated protein 70-4 (515 aa).

Coiled-coil stretches lie at residues 26-106 and 136-351; these read VVDE…ALSA and LESD…NTSA. The segment at 208-410 is required for targeting to microtubules; it reads LLEKSNRQQV…KQPGSETEAA (203 aa). Residues 340 to 515 are disordered; it reads DDMRNESSNT…VKSTKDSCEI (176 aa). Residues 345-362 are compositionally biased toward polar residues; the sequence is ESSNTSASNKDNATSKQA. Residues 364 to 374 are compositionally biased toward low complexity; the sequence is PKRSSSQPRRP. Composition is skewed to basic and acidic residues over residues 409-425, 450-461, and 484-515; these read AAEKNRHAAAKRFDSPR, KVADDAGKENKE, and SEHEEAMDLRKLDEGKADDSDAVKSTKDSCEI.

The protein belongs to the MAP70 family.

The protein resides in the cytoplasm. It is found in the cytoskeleton. Functionally, plant-specific protein that interact with microtubules. The protein is Microtubule-associated protein 70-4 (MAP70.4) of Oryza sativa subsp. japonica (Rice).